The primary structure comprises 333 residues: Chitinase-like protein 2 (333 aa).

The signal sequence occupies residues 1–27 (MVSKPLFSLLLLTVALVVFQTGTLVNA). The cysteines at positions 50 and 56 are disulfide-linked. An N-linked (GlcNAc...) asparagine glycan is attached at Asn-65. A disulfide bond links Cys-165 and Cys-175. 2 N-linked (GlcNAc...) asparagine glycosylation sites follow: Asn-216 and Asn-252. Cysteines 275 and 313 form a disulfide. The segment at 307-333 (PHEKLSCADQEPFSSSSSAPPSSGSSS) is disordered. Residues 320–333 (SSSSSAPPSSGSSS) show a composition bias toward low complexity.

It belongs to the glycosyl hydrolase 19 family. In terms of tissue distribution, mostly expressed in stems, especially in xylem and interfascicular fibers.

It localises to the secreted. Its function is as follows. No chitinase activity. Required for proper cell wall biosynthesis in etiolated seedlings. Prevents lignin accumulation in hypocotyls. The sequence is that of Chitinase-like protein 2 (CTL2) from Arabidopsis thaliana (Mouse-ear cress).